Here is a 464-residue protein sequence, read N- to C-terminus: tRNA modification GTPase MnmE (464 aa).

Residues Arg-29, Glu-91, and Arg-131 each contribute to the (6S)-5-formyl-5,6,7,8-tetrahydrofolate site. The 162-residue stretch at Gly-226–Gly-387 folds into the TrmE-type G domain. Asn-236 contributes to the K(+) binding site. GTP is bound by residues Asn-236 to Ser-241, Thr-255 to Thr-261, and Asp-280 to Gly-283. Position 240 (Ser-240) interacts with Mg(2+). Positions 255, 257, and 260 each coordinate K(+). Thr-261 serves as a coordination point for Mg(2+). Lys-464 is a binding site for (6S)-5-formyl-5,6,7,8-tetrahydrofolate.

Belongs to the TRAFAC class TrmE-Era-EngA-EngB-Septin-like GTPase superfamily. TrmE GTPase family. As to quaternary structure, homodimer. Heterotetramer of two MnmE and two MnmG subunits. K(+) is required as a cofactor.

Its subcellular location is the cytoplasm. Functionally, exhibits a very high intrinsic GTPase hydrolysis rate. Involved in the addition of a carboxymethylaminomethyl (cmnm) group at the wobble position (U34) of certain tRNAs, forming tRNA-cmnm(5)s(2)U34. In Prochlorococcus marinus (strain NATL1A), this protein is tRNA modification GTPase MnmE.